The primary structure comprises 86 residues: MSINKIFEESWKNRLTKYEIARIISARALQLAMGASPLIDTNNLPFNDVISIAEEELKRGVLPITVRRVYPNGKIELVSVKKVEFK.

Belongs to the archaeal Rpo6/eukaryotic RPB6 RNA polymerase subunit family. In terms of assembly, part of the RNA polymerase complex.

The protein localises to the cytoplasm. The catalysed reaction is RNA(n) + a ribonucleoside 5'-triphosphate = RNA(n+1) + diphosphate. DNA-dependent RNA polymerase (RNAP) catalyzes the transcription of DNA into RNA using the four ribonucleoside triphosphates as substrates. The polypeptide is DNA-directed RNA polymerase subunit Rpo6 (Sulfurisphaera tokodaii (strain DSM 16993 / JCM 10545 / NBRC 100140 / 7) (Sulfolobus tokodaii)).